Reading from the N-terminus, the 101-residue chain is Urease subunit beta (101 aa).

This sequence belongs to the urease beta subunit family. As to quaternary structure, heterotrimer of UreA (gamma), UreB (beta) and UreC (alpha) subunits. Three heterotrimers associate to form the active enzyme.

It is found in the cytoplasm. The catalysed reaction is urea + 2 H2O + H(+) = hydrogencarbonate + 2 NH4(+). It participates in nitrogen metabolism; urea degradation; CO(2) and NH(3) from urea (urease route): step 1/1. The chain is Urease subunit beta from Jannaschia sp. (strain CCS1).